The sequence spans 301 residues: Large ribosomal subunit protein uL18 (301 aa).

Residues 257 to 271 (NPERVKSTKKNDKPK) are compositionally biased toward basic and acidic residues. Positions 257 to 283 (NPERVKSTKKNDKPKRDHKKFYPTKLT) are disordered.

Belongs to the universal ribosomal protein uL18 family. In terms of assembly, component of the large ribosomal subunit (LSU).

It is found in the cytoplasm. Its subcellular location is the nucleus. Component of the ribosome, a large ribonucleoprotein complex responsible for the synthesis of proteins in the cell. The small ribosomal subunit (SSU) binds messenger RNAs (mRNAs) and translates the encoded message by selecting cognate aminoacyl-transfer RNA (tRNA) molecules. The large subunit (LSU) contains the ribosomal catalytic site termed the peptidyl transferase center (PTC), which catalyzes the formation of peptide bonds, thereby polymerizing the amino acids delivered by tRNAs into a polypeptide chain. The nascent polypeptides leave the ribosome through a tunnel in the LSU and interact with protein factors that function in enzymatic processing, targeting, and the membrane insertion of nascent chains at the exit of the ribosomal tunnel. The protein is Large ribosomal subunit protein uL18 (RPL5) of Tetrahymena thermophila (strain SB210).